Reading from the N-terminus, the 236-residue chain is Small ribosomal subunit protein uS2c (236 aa).

This sequence belongs to the universal ribosomal protein uS2 family.

The protein localises to the plastid. Its subcellular location is the chloroplast. The chain is Small ribosomal subunit protein uS2c (rps2) from Triticum aestivum (Wheat).